Consider the following 208-residue polypeptide: Small ribosomal subunit protein uS4 (208 aa).

An S4 RNA-binding domain is found at 98–161 (LRLDNVVFRL…RKVVRISEAL (64 aa)).

The protein belongs to the universal ribosomal protein uS4 family. Part of the 30S ribosomal subunit. Contacts protein S5. The interaction surface between S4 and S5 is involved in control of translational fidelity.

In terms of biological role, one of the primary rRNA binding proteins, it binds directly to 16S rRNA where it nucleates assembly of the body of the 30S subunit. With S5 and S12 plays an important role in translational accuracy. The sequence is that of Small ribosomal subunit protein uS4 from Anaeromyxobacter sp. (strain Fw109-5).